A 114-amino-acid polypeptide reads, in one-letter code: Methylamine utilization protein MauL (114 aa).

Its pathway is one-carbon metabolism; methylamine degradation. Its function is as follows. Probably involved in TTQ prosthetic group biosynthesis. The chain is Methylamine utilization protein MauL (mauL) from Methylorubrum extorquens (strain ATCC 14718 / DSM 1338 / JCM 2805 / NCIMB 9133 / AM1) (Methylobacterium extorquens).